The primary structure comprises 293 residues: Formamidopyrimidine-DNA glycosylase (293 aa).

Catalysis depends on proline 2, which acts as the Schiff-base intermediate with DNA. The active-site Proton donor is the glutamate 3. Lysine 58 acts as the Proton donor; for beta-elimination activity in catalysis. DNA contacts are provided by histidine 104, arginine 123, and arginine 166. The FPG-type zinc finger occupies 257 to 293 (AVYDREGEPCRSKGCDGVVKRFVQNGRSTFWCPKCQK). Residue arginine 283 is the Proton donor; for delta-elimination activity of the active site.

It belongs to the FPG family. As to quaternary structure, monomer. The cofactor is Zn(2+).

It catalyses the reaction Hydrolysis of DNA containing ring-opened 7-methylguanine residues, releasing 2,6-diamino-4-hydroxy-5-(N-methyl)formamidopyrimidine.. The enzyme catalyses 2'-deoxyribonucleotide-(2'-deoxyribose 5'-phosphate)-2'-deoxyribonucleotide-DNA = a 3'-end 2'-deoxyribonucleotide-(2,3-dehydro-2,3-deoxyribose 5'-phosphate)-DNA + a 5'-end 5'-phospho-2'-deoxyribonucleoside-DNA + H(+). In terms of biological role, involved in base excision repair of DNA damaged by oxidation or by mutagenic agents. Acts as a DNA glycosylase that recognizes and removes damaged bases. Has a preference for oxidized purines, such as 7,8-dihydro-8-oxoguanine (8-oxoG). Has AP (apurinic/apyrimidinic) lyase activity and introduces nicks in the DNA strand. Cleaves the DNA backbone by beta-delta elimination to generate a single-strand break at the site of the removed base with both 3'- and 5'-phosphates. This is Formamidopyrimidine-DNA glycosylase from Rhodopseudomonas palustris (strain BisB18).